We begin with the raw amino-acid sequence, 77 residues long: Conotoxin G11.1 (77 aa).

Residues 1-20 (MKLFLAIVLILMLQFLSTGA) form the signal peptide. The propeptide occupies 21–45 (ETSDNHASRSTTALRDWLLGPKAKR). Cystine bridges form between cysteine 46–cysteine 60, cysteine 53–cysteine 65, cysteine 59–cysteine 69, and cysteine 64–cysteine 76.

The protein belongs to the conotoxin I3 superfamily. Expressed by the venom duct.

The protein localises to the secreted. In terms of biological role, may embed in the membrane and bind to the voltage sensor domain of a ion channel. Does not induce paralysis when injected in fish, leading to the hypothesis that it may be part of the sedative nirvana cabal. The sequence is that of Conotoxin G11.1 from Conus geographus (Geography cone).